A 128-amino-acid polypeptide reads, in one-letter code: Large ribosomal subunit protein uL22 (128 aa).

It belongs to the universal ribosomal protein uL22 family. As to quaternary structure, part of the 50S ribosomal subunit.

In terms of biological role, this protein binds specifically to 23S rRNA; its binding is stimulated by other ribosomal proteins, e.g. L4, L17, and L20. It is important during the early stages of 50S assembly. It makes multiple contacts with different domains of the 23S rRNA in the assembled 50S subunit and ribosome. Functionally, the globular domain of the protein is located near the polypeptide exit tunnel on the outside of the subunit, while an extended beta-hairpin is found that lines the wall of the exit tunnel in the center of the 70S ribosome. The polypeptide is Large ribosomal subunit protein uL22 (Prochlorococcus marinus subsp. pastoris (strain CCMP1986 / NIES-2087 / MED4)).